The chain runs to 287 residues: Phosphatidylserine decarboxylase proenzyme (287 aa).

Active-site charge relay system; for autoendoproteolytic cleavage activity residues include aspartate 90, histidine 147, and serine 252. The active-site Schiff-base intermediate with substrate; via pyruvic acid; for decarboxylase activity is serine 252. A Pyruvic acid (Ser); by autocatalysis modification is found at serine 252.

The protein belongs to the phosphatidylserine decarboxylase family. PSD-B subfamily. Prokaryotic type I sub-subfamily. In terms of assembly, heterodimer of a large membrane-associated beta subunit and a small pyruvoyl-containing alpha subunit. Requires pyruvate as cofactor. In terms of processing, is synthesized initially as an inactive proenzyme. Formation of the active enzyme involves a self-maturation process in which the active site pyruvoyl group is generated from an internal serine residue via an autocatalytic post-translational modification. Two non-identical subunits are generated from the proenzyme in this reaction, and the pyruvate is formed at the N-terminus of the alpha chain, which is derived from the carboxyl end of the proenzyme. The autoendoproteolytic cleavage occurs by a canonical serine protease mechanism, in which the side chain hydroxyl group of the serine supplies its oxygen atom to form the C-terminus of the beta chain, while the remainder of the serine residue undergoes an oxidative deamination to produce ammonia and the pyruvoyl prosthetic group on the alpha chain. During this reaction, the Ser that is part of the protease active site of the proenzyme becomes the pyruvoyl prosthetic group, which constitutes an essential element of the active site of the mature decarboxylase.

It is found in the cell membrane. The enzyme catalyses a 1,2-diacyl-sn-glycero-3-phospho-L-serine + H(+) = a 1,2-diacyl-sn-glycero-3-phosphoethanolamine + CO2. Its pathway is phospholipid metabolism; phosphatidylethanolamine biosynthesis; phosphatidylethanolamine from CDP-diacylglycerol: step 2/2. Catalyzes the formation of phosphatidylethanolamine (PtdEtn) from phosphatidylserine (PtdSer). The protein is Phosphatidylserine decarboxylase proenzyme of Pseudomonas putida (strain ATCC 47054 / DSM 6125 / CFBP 8728 / NCIMB 11950 / KT2440).